Here is a 34-residue protein sequence, read N- to C-terminus: Photosystem II reaction center protein M (34 aa).

A helical transmembrane segment spans residues glycine 7–isoleucine 27.

This sequence belongs to the PsbM family. PSII is composed of 1 copy each of membrane proteins PsbA, PsbB, PsbC, PsbD, PsbE, PsbF, PsbH, PsbI, PsbJ, PsbK, PsbL, PsbM, PsbT, PsbX, PsbY, Psb30/Ycf12, peripheral proteins PsbO, CyanoQ (PsbQ), PsbU, PsbV and a large number of cofactors. It forms dimeric complexes.

Its subcellular location is the cellular thylakoid membrane. One of the components of the core complex of photosystem II (PSII). PSII is a light-driven water:plastoquinone oxidoreductase that uses light energy to abstract electrons from H(2)O, generating O(2) and a proton gradient subsequently used for ATP formation. It consists of a core antenna complex that captures photons, and an electron transfer chain that converts photonic excitation into a charge separation. This subunit is found at the monomer-monomer interface. The chain is Photosystem II reaction center protein M from Prochlorococcus marinus (strain MIT 9303).